The primary structure comprises 224 residues: Ribonuclease 3 (224 aa).

Positions 5 to 127 constitute an RNase III domain; it reads LERLCRRLNY…ILAAIYLDGG (123 aa). A Mg(2+)-binding site is contributed by E40. D44 is a catalytic residue. Mg(2+) contacts are provided by D113 and E116. The active site involves E116. A DRBM domain is found at 154–224; the sequence is DAKTQLQEFL…AKAMLEQLQG (71 aa).

Belongs to the ribonuclease III family. In terms of assembly, homodimer. Requires Mg(2+) as cofactor.

It localises to the cytoplasm. The enzyme catalyses Endonucleolytic cleavage to 5'-phosphomonoester.. Functionally, digests double-stranded RNA. Involved in the processing of primary rRNA transcript to yield the immediate precursors to the large and small rRNAs (23S and 16S). Processes some mRNAs, and tRNAs when they are encoded in the rRNA operon. Processes pre-crRNA and tracrRNA of type II CRISPR loci if present in the organism. The polypeptide is Ribonuclease 3 (Legionella pneumophila (strain Lens)).